Reading from the N-terminus, the 155-residue chain is Small ribosomal subunit protein uS7 (155 aa).

This sequence belongs to the universal ribosomal protein uS7 family. As to quaternary structure, part of the 30S ribosomal subunit. Contacts proteins S9 and S11.

In terms of biological role, one of the primary rRNA binding proteins, it binds directly to 16S rRNA where it nucleates assembly of the head domain of the 30S subunit. Is located at the subunit interface close to the decoding center, probably blocks exit of the E-site tRNA. In Thermosipho melanesiensis (strain DSM 12029 / CIP 104789 / BI429), this protein is Small ribosomal subunit protein uS7.